The chain runs to 843 residues: Histone-lysine N-methyltransferase PRDM9 (843 aa).

Residues Lys23–Asn86 form the KRAB-related domain. Disordered regions lie at residues Ile85–Pro104 and Val110–Lys170. Zn(2+) is bound by residues Cys205, Cys208, Cys216, and His219. An SET domain is found at Pro244–Gly358. S-adenosyl-L-methionine contacts are provided by residues Ala256 to Leu258, Tyr291, and Asn320 to Cys321. Asn288–Leu294 serves as a coordination point for substrate. Tyr357 is a binding site for substrate. Lys368 carries the N6,N6,N6-trimethyllysine; alternate modification. At Lys368 the chain carries N6-methyllysine; alternate. An N6-methyllysine mark is found at Lys372 and Lys374. Residues His388 to His411 form a C2H2-type 1 zinc finger. Zn(2+) is bound by residues Cys390, Cys393, His406, and His411. Residues Gly418–Thr493 are disordered. A compositionally biased stretch (basic and acidic residues) spans Gln436 to Lys454. A compositionally biased stretch (polar residues) spans Arg462–Lys472. Over residues Glu473 to Arg488 the composition is skewed to basic and acidic residues. The C2H2-type 2; degenerate zinc finger occupies Gln513–His531. 11 consecutive C2H2-type zinc fingers follow at residues Tyr537–His559, Tyr565–His587, Tyr593–His615, Tyr621–His643, Tyr649–His671, Tyr677–His699, Tyr705–His727, Tyr733–His755, Tyr761–His783, Tyr789–His811, and Tyr817–His839. 16 residues coordinate Zn(2+): Cys707, Cys710, His723, His727, Cys735, Cys738, His751, His755, Cys763, Cys766, His779, His783, Cys791, Cys794, His807, and His811. The tract at residues Thr715 to Ile805 is DNA-binding.

This sequence belongs to the class V-like SAM-binding methyltransferase superfamily. In terms of assembly, homodimer. Interacts with EHMT2 and CDYL; interaction only takes place when PRDM9 is bound to hotspot DNA. Interacts with CXXC1; this interaction does not link PRDM9-activated recombination hotspot sites with DSB machinery and is not required for the hotspot recognition pathway. Forms a complex with EWSR1, REC8, SYCP3 and SYCP1; complex formation is dependent of phosphorylated form of REC8 and requires PRDM9 bound to hotspot DNA; EWSR1 joins PRDM9 with the chromosomal axis through REC8. Mono-methylated; automethylated. Tri-methylated; automethylated. Mono-methylation is predominant; automethylation is lower and slower than H3 peptide methylation and is in a highest S-adenosyl-L-methionine concentration-dependent. There are two major sites for automethylation at Lys-368 and Lys-374. Lysines can be simultaneously methylated, such as Lys-368(me3)/Lys-372(me1), Lys-368(me1)/Lys-374(me1) and Lys-368(me1)/Lys-372(me1)/Lys-374(me1). Automethylation is an intramolecular (cis) process. As to expression, specifically expressed in germ cells entering meiotic prophase in female fetal gonads and in postnatal testis. Expressed in early meiotic prophase.

The protein localises to the nucleus. Its subcellular location is the chromosome. The catalysed reaction is L-lysyl-[protein] + S-adenosyl-L-methionine = N(6)-methyl-L-lysyl-[protein] + S-adenosyl-L-homocysteine + H(+). It catalyses the reaction N(6),N(6)-dimethyl-L-lysyl-[protein] + S-adenosyl-L-methionine = N(6),N(6),N(6)-trimethyl-L-lysyl-[protein] + S-adenosyl-L-homocysteine + H(+). It carries out the reaction L-lysyl(4)-[histone H3] + 3 S-adenosyl-L-methionine = N(6),N(6),N(6)-trimethyl-L-lysyl(4)-[histone H3] + 3 S-adenosyl-L-homocysteine + 3 H(+). The enzyme catalyses L-lysyl(36)-[histone H3] + 3 S-adenosyl-L-methionine = N(6),N(6),N(6)-trimethyl-L-lysyl(36)-[histone H3] + 3 S-adenosyl-L-homocysteine + 3 H(+). The catalysed reaction is L-lysyl(9)-[histone H3] + 3 S-adenosyl-L-methionine = N(6),N(6),N(6)-trimethyl-L-lysyl(9)-[histone H3] + 3 S-adenosyl-L-homocysteine + 3 H(+). It catalyses the reaction L-lysyl(20)-[histone H4] + S-adenosyl-L-methionine = N(6)-methyl-L-lysyl(20)-[histone H4] + S-adenosyl-L-homocysteine + H(+). It carries out the reaction N(6)-methyl-L-lysyl(20)-[histone H4] + S-adenosyl-L-methionine = N(6),N(6)-dimethyl-L-lysyl(20)-[histone H4] + S-adenosyl-L-homocysteine + H(+). Functionally, histone methyltransferase that sequentially mono-, di-, and tri-methylates both 'Lys-4' (H3K4) and 'Lys-36' (H3K36) of histone H3 to produce respectively trimethylated 'Lys-4' (H3K4me3) and trimethylated 'Lys-36' (H3K36me3) histone H3 and plays a key role in meiotic prophase by determining hotspot localization thereby promoting meiotic recombination. Can also methylate all four core histones with H3 being the best substrate and the most highly modified. Is also able, on one hand, to mono and di-methylate H4K20 and on other hand to trimethylate H3K9 with the di-methylated H3K9 as the best substrate. During meiotic prophase, binds specific DNA sequences through its zinc finger domains thereby determining hotspot localization where it promotes local H3K4me3 and H3K36me3 enrichment on the same nucleosomes through its histone methyltransferase activity. Thereby promotes double-stranded breaks (DSB) formation, at this subset of PRDM9-binding sites, that initiates meiotic recombination for the proper meiotic progression. During meiotic progression hotspot-bound PRDM9 interacts with several complexes; in early leptonema binds CDYL and EHMT2 followed by EWSR1 and CXXC1 by the end of leptonema. EWSR1 joins PRDM9 with the chromosomal axis through REC8. In this way, controls the DSB repair pathway, pairing of homologous chromosomes and sex body formation. Moreover plays a central role in the transcriptional activation of genes during early meiotic prophase thanks to H3K4me3 and H3K36me3 enrichment that represents a specific tag for epigenetic transcriptional activation. In addition performs automethylation. Acetylation and phosphorylation of histone H3 attenuate or prevent histone H3 methylation. The chain is Histone-lysine N-methyltransferase PRDM9 from Mus musculus (Mouse).